The chain runs to 131 residues: Small ribosomal subunit protein uS8 (131 aa).

This sequence belongs to the universal ribosomal protein uS8 family. As to quaternary structure, part of the 30S ribosomal subunit. Contacts proteins S5 and S12.

In terms of biological role, one of the primary rRNA binding proteins, it binds directly to 16S rRNA central domain where it helps coordinate assembly of the platform of the 30S subunit. This Janthinobacterium sp. (strain Marseille) (Minibacterium massiliensis) protein is Small ribosomal subunit protein uS8.